Here is a 440-residue protein sequence, read N- to C-terminus: uncharacterized protein (440 aa).

The signal sequence occupies residues 1–29 (MLRLQMMEGLIVKRTLLLILLLVISVSYA).

Belongs to the Mj S-layer protein family.

This is an uncharacterized protein from Methanocaldococcus jannaschii (strain ATCC 43067 / DSM 2661 / JAL-1 / JCM 10045 / NBRC 100440) (Methanococcus jannaschii).